The primary structure comprises 693 residues: Elongation factor G (693 aa).

The region spanning 8 to 282 (KNTRNIGIMA…AAIEYLPSPL (275 aa)) is the tr-type G domain. GTP is bound by residues 17 to 24 (AHIDAGKT), 81 to 85 (DTPGH), and 135 to 138 (NKMD).

The protein belongs to the TRAFAC class translation factor GTPase superfamily. Classic translation factor GTPase family. EF-G/EF-2 subfamily.

It is found in the cytoplasm. In terms of biological role, catalyzes the GTP-dependent ribosomal translocation step during translation elongation. During this step, the ribosome changes from the pre-translocational (PRE) to the post-translocational (POST) state as the newly formed A-site-bound peptidyl-tRNA and P-site-bound deacylated tRNA move to the P and E sites, respectively. Catalyzes the coordinated movement of the two tRNA molecules, the mRNA and conformational changes in the ribosome. The sequence is that of Elongation factor G from Macrococcus caseolyticus (strain JCSC5402) (Macrococcoides caseolyticum).